Here is a 600-residue protein sequence, read N- to C-terminus: Transcription factor efl-3 (600 aa).

The segment at 35-65 is disordered; that stretch reads LPEPRVNRTTDPDHENLLPSPVPRPSPAMSQ. The segment covering 39–50 has biased composition (basic and acidic residues); the sequence is RVNRTTDPDHEN. 2 DNA-binding regions span residues 95-164 and 253-343; these read RKEK…QWQG and RDRQ…VYCG.

The protein belongs to the E2F/DP family.

It localises to the nucleus. Functionally, probable transcription factor which represses gene expression in a subset of ventral nerve cord neurons. Involved in regulating programmed cell death and determining cell fate during development, acting in a partially redundant manner with lin-39 to repress the BH3 domain-encoding gene egl-1 in the VA and VB motor neurons. The protein is Transcription factor efl-3 of Caenorhabditis elegans.